The sequence spans 553 residues: Protein YloV (553 aa).

Residues 9-201 enclose the DhaL domain; it reads RTFAEMILAG…LLCVYEGFLA (193 aa).

The chain is Protein YloV (yloV) from Bacillus subtilis (strain 168).